The primary structure comprises 195 residues: Peptidyl-tRNA hydrolase (195 aa).

Residue Y17 coordinates tRNA. H22 functions as the Proton acceptor in the catalytic mechanism. Residues Y68, N70, and N116 each coordinate tRNA.

Belongs to the PTH family. Monomer.

It is found in the cytoplasm. It catalyses the reaction an N-acyl-L-alpha-aminoacyl-tRNA + H2O = an N-acyl-L-amino acid + a tRNA + H(+). Its function is as follows. Hydrolyzes ribosome-free peptidyl-tRNAs (with 1 or more amino acids incorporated), which drop off the ribosome during protein synthesis, or as a result of ribosome stalling. In terms of biological role, catalyzes the release of premature peptidyl moieties from peptidyl-tRNA molecules trapped in stalled 50S ribosomal subunits, and thus maintains levels of free tRNAs and 50S ribosomes. In Shewanella frigidimarina (strain NCIMB 400), this protein is Peptidyl-tRNA hydrolase.